We begin with the raw amino-acid sequence, 273 residues long: Protein FAM210A (273 aa).

The tract at residues 95–116 is disordered; that stretch reads VLSSSSTSQETPSEKKEEPDPL. Basic and acidic residues predominate over residues 106–116; sequence PSEKKEEPDPL. Residues 118 to 230 form the DUF1279 domain; that stretch reads DKSISLYQRF…GYMSTPPPVK (113 aa). A helical transmembrane segment spans residues 138–158; that stretch reads LIPVHLITSGIWFGTFYYASI. Residues 233–272 adopt a coiled-coil conformation; it reads LQGRMEETKELISEKMEETKDRLTEKLQETKEKVSFKKKV. The tract at residues 247–273 is disordered; it reads KMEETKDRLTEKLQETKEKVSFKKKVE.

The protein belongs to the FAM210 family. Interacts with ATAD3A.

It is found in the membrane. It localises to the mitochondrion. Its subcellular location is the cytoplasm. May play a role in the structure and strength of both muscle and bone. The chain is Protein FAM210A (Fam210a) from Rattus norvegicus (Rat).